Consider the following 437-residue polypeptide: Eukaryotic peptide chain release factor subunit 1 (437 aa).

An NIKS motif; plays an important role in translational termination motif is present at residues 61-64 (NIKS).

It belongs to the eukaryotic release factor 1 family. In terms of assembly, component of the eRF1-eRF3-GTP ternary complex, composed of ETF1/ERF1 and eRF3 (GSPT1/ERF3A or GSPT2/ERF3B) and GTP.

It is found in the cytoplasm. Its function is as follows. Component of the eRF1-eRF3-GTP ternary complex, a ternary complex that mediates translation termination in response to the termination codons. The eRF1-eRF3-GTP complex binds to a stop codon in the ribosomal A-site. ETF1/ERF1 is responsible for stop codon recognition and inducing hydrolysis of peptidyl-tRNA. Following GTP hydrolysis, eRF3 (GSPT1/ERF3A or GSPT2/ERF3B) dissociates, permitting ETF1/eRF1 to accommodate fully in the A-site, followed by hydrolysis of peptidyl-tRNA. This is Eukaryotic peptide chain release factor subunit 1 (etf1) from Xenopus tropicalis (Western clawed frog).